A 208-amino-acid chain; its full sequence is uncharacterized protein (208 aa).

This is an uncharacterized protein from Caenorhabditis elegans.